The primary structure comprises 229 residues: MEAIAKYDFKATADDELSFKRGDVLKVLNEECDQNWYKAELNGKDGFIPKNYIEMKAHPWFFGKIPRAKAEEMLGKQRHDGAFLIRESESAPGDFSLSVKFGNDVQHFKVLRDGAGKYFLWVVKFNSLNELVDYHRSTSVSRNQQIFLRDIEQVPQVHGGDRATSLPQQPTYVQALFDFDPQEDGELGFRRGDFIQVVDNSDPNWWKGTCLSQTGMFPRNYVTPVNRNM.

The SH3 1 domain maps to 1–58 (MEAIAKYDFKATADDELSFKRGDVLKVLNEECDQNWYKAELNGKDGFIPKNYIEMKAH). The SH2 domain occupies 60-152 (WFFGKIPRAK…NQQIFLRDIE (93 aa)). Positions 168-227 (QQPTYVQALFDFDPQEDGELGFRRGDFIQVVDNSDPNWWKGTCLSQTGMFPRNYVTPVNR) constitute an SH3 2 domain.

This sequence belongs to the GRB2/sem-5/DRK family.

The protein resides in the nucleus. The protein localises to the cytoplasm. Its subcellular location is the endosome. It is found in the golgi apparatus. Its function is as follows. Adapter protein that provides a critical link between cell surface growth factor receptors and the Ras signaling pathway. Promotes meiotic reinitiation during oocyte maturation. The chain is Growth factor receptor-bound protein 2-A (grb2-a) from Xenopus laevis (African clawed frog).